The following is a 126-amino-acid chain: Small ribosomal subunit protein bS6 (126 aa).

The tract at residues 107 to 126 (RDRERGERSERPRDDFAPAA) is disordered.

It belongs to the bacterial ribosomal protein bS6 family.

Functionally, binds together with bS18 to 16S ribosomal RNA. The polypeptide is Small ribosomal subunit protein bS6 (Caulobacter sp. (strain K31)).